The sequence spans 93 residues: SH3 domain-binding glutamic acid-rich-like protein 3 (93 aa).

Ser2 carries the post-translational modification N-acetylserine. One can recognise a Glutaredoxin domain in the interval Ser2 to Ala93. A glycan (O-linked (GalNAc...) threonine) is linked at Thr9.

Belongs to the SH3BGR family. Homodimer. Interacts with MYO1C (via its IQ motifs); the interaction is dependent on calcium and takes place at membrane ruffles. In terms of processing, may be glycosylated.

The protein localises to the cytoplasm. It is found in the cytosol. Its subcellular location is the cell projection. The protein resides in the ruffle membrane. It localises to the nucleus. Could act as a modulator of glutaredoxin biological activity. May play a role in cytoskeleton organization. This Bos taurus (Bovine) protein is SH3 domain-binding glutamic acid-rich-like protein 3 (SH3BGRL3).